The chain runs to 393 residues: Methylthioribose kinase (393 aa).

ATP-binding positions include asparagine 38, lysine 53, and 107–109; that span reads EDL. Aspartate 225 contacts substrate. Residue 242–244 participates in ATP binding; it reads DPE. A substrate-binding site is contributed by arginine 332.

Belongs to the methylthioribose kinase family. As to quaternary structure, homodimer.

The catalysed reaction is 5-(methylsulfanyl)-D-ribose + ATP = 5-(methylsulfanyl)-alpha-D-ribose 1-phosphate + ADP + H(+). It participates in amino-acid biosynthesis; L-methionine biosynthesis via salvage pathway; S-methyl-5-thio-alpha-D-ribose 1-phosphate from S-methyl-5'-thioadenosine (hydrolase route): step 2/2. Its function is as follows. Catalyzes the phosphorylation of methylthioribose into methylthioribose-1-phosphate. The sequence is that of Methylthioribose kinase from Bacillus cereus (strain B4264).